An 841-amino-acid polypeptide reads, in one-letter code: ATP-dependent helicase Lhr-Core (841 aa).

The ATP site is built by Gln-39, Lys-62, Thr-63, Asp-181, Glu-182, Ile-352, Arg-369, and His-372. A Helicase ATP-binding domain is found at 43–234 (IKEIHEGKNV…FLVGNGRDCY (192 aa)). The DEVH box motif lies at 181 to 184 (DEIH). Residues 266–416 (RLYNLLKKLI…RIHIPKNCLD (151 aa)) enclose the Helicase C-terminal domain. The segment at 417-500 (VLAQHLVGMA…IYYMNVGTIP (84 aa)) is WH domain. Residues 501-841 (DETAVDVIAD…MEFISMKGKK (341 aa)) form a domain 4 region.

This sequence belongs to the Lhr helicase family. Lhr-Core subfamily. As to quaternary structure, monomer.

The catalysed reaction is Couples ATP hydrolysis with the unwinding of duplex DNA by translocating in the 3'-5' direction.. The enzyme catalyses ATP + H2O = ADP + phosphate + H(+). In terms of biological role, DNA helicase that loads on single-stranded (ss)DNA and translocates in a 3'-5' direction, probably involved in DNA repair. Archaeal orthologs have double-stranded (ds)DNA and/or RNA:DNA helicase activity. This chain is ATP-dependent helicase Lhr-Core, found in Methanocaldococcus jannaschii (strain ATCC 43067 / DSM 2661 / JAL-1 / JCM 10045 / NBRC 100440) (Methanococcus jannaschii).